A 520-amino-acid chain; its full sequence is Na(+)/H(+) antiporter NhaB (520 aa).

A run of 12 helical transmembrane segments spans residues 27–49 (GFLI…LLVI), 62–82 (YPLL…MTSA), 97–117 (LLLI…LLIF), 120–140 (LLLG…AAAF), 144–164 (FLDA…FYGI), 202–222 (LMMH…VGEP), 238–258 (FLLR…VTCI), 303–323 (GLIG…VGLI), 348–368 (TEAL…AVII), 391–411 (LFYL…VGTV), 447–467 (ATPN…APLI), and 475–495 (VWMA…CVQF).

This sequence belongs to the NhaB Na(+)/H(+) (TC 2.A.34) antiporter family.

It is found in the cell inner membrane. The catalysed reaction is 2 Na(+)(in) + 3 H(+)(out) = 2 Na(+)(out) + 3 H(+)(in). Its function is as follows. Na(+)/H(+) antiporter that extrudes sodium in exchange for external protons. This chain is Na(+)/H(+) antiporter NhaB, found in Cronobacter sakazakii (strain ATCC BAA-894) (Enterobacter sakazakii).